The following is a 182-amino-acid chain: Large ribosomal subunit protein bL25 (182 aa).

It belongs to the bacterial ribosomal protein bL25 family. CTC subfamily. In terms of assembly, part of the 50S ribosomal subunit; part of the 5S rRNA/L5/L18/L25 subcomplex. Contacts the 5S rRNA. Binds to the 5S rRNA independently of L5 and L18.

Functionally, this is one of the proteins that binds to the 5S RNA in the ribosome where it forms part of the central protuberance. This chain is Large ribosomal subunit protein bL25, found in Borreliella burgdorferi (strain ZS7) (Borrelia burgdorferi).